Reading from the N-terminus, the 39-residue chain is U-limacoditoxin(13)-As54 (39 aa).

Positions 1-23 are cleaved as a signal peptide; the sequence is MSKYIVLLVVSAIALLQFSMIEC. Phenylalanine amide is present on Phe-37.

This sequence belongs to the FARP (FMRFamide related peptide) family. Expressed by the venom secretory cell of the spine. The spine is a cuticular structure containing a single large nucleated venom-secreting cell at its base. It is an independent unit capable of producing, storing and injecting venom. On the back of A.stimulea caterpillars, spines are grouped together by 50 to 100 to form scoli, of which there are eight.

It localises to the secreted. Strongly activates (at 30 uM) the human neuropeptide FF receptor 1 (NPFF1R), a G-protein coupled receptor, with an effect that is equipotent to the endogenous RFRP-1 ligand in activating NPFFR1. Is toxic when injected into Drosophila melanogaster. Also shows a moderate anthelmintic activity against the parasitic nematode H.contortus (drug susceptible Kirby isolate) (IC(50)=20.1 uM). This is U-limacoditoxin(13)-As54 from Acharia stimulea (Saddleback caterpillar moth).